The following is a 190-amino-acid chain: Probable calcium-binding protein CML27 (190 aa).

3 EF-hand domains span residues 27-62, 115-150, and 153-188; these read LNAL…LGLG, DDEG…LGLP, and RNLA…ITVW. Residues D40, N42, D44, E46, E51, D128, D130, D132, E139, D166, D168, D170, R172, and E177 each contribute to the Ca(2+) site.

In terms of biological role, potential calcium sensor. The protein is Probable calcium-binding protein CML27 (CML27) of Oryza sativa subsp. japonica (Rice).